A 355-amino-acid chain; its full sequence is UDP-N-acetylglucosamine--N-acetylmuramyl-(pentapeptide) pyrophosphoryl-undecaprenol N-acetylglucosamine transferase (355 aa).

UDP-N-acetyl-alpha-D-glucosamine contacts are provided by residues 7-9 (TGG), asparagine 119, arginine 159, serine 187, isoleucine 241, and glutamine 286.

Belongs to the glycosyltransferase 28 family. MurG subfamily.

The protein localises to the cell inner membrane. It catalyses the reaction di-trans,octa-cis-undecaprenyl diphospho-N-acetyl-alpha-D-muramoyl-L-alanyl-D-glutamyl-meso-2,6-diaminopimeloyl-D-alanyl-D-alanine + UDP-N-acetyl-alpha-D-glucosamine = di-trans,octa-cis-undecaprenyl diphospho-[N-acetyl-alpha-D-glucosaminyl-(1-&gt;4)]-N-acetyl-alpha-D-muramoyl-L-alanyl-D-glutamyl-meso-2,6-diaminopimeloyl-D-alanyl-D-alanine + UDP + H(+). It participates in cell wall biogenesis; peptidoglycan biosynthesis. Its function is as follows. Cell wall formation. Catalyzes the transfer of a GlcNAc subunit on undecaprenyl-pyrophosphoryl-MurNAc-pentapeptide (lipid intermediate I) to form undecaprenyl-pyrophosphoryl-MurNAc-(pentapeptide)GlcNAc (lipid intermediate II). This chain is UDP-N-acetylglucosamine--N-acetylmuramyl-(pentapeptide) pyrophosphoryl-undecaprenol N-acetylglucosamine transferase, found in Nitrosomonas eutropha (strain DSM 101675 / C91 / Nm57).